The chain runs to 314 residues: Taste receptor type 2 member 42 (314 aa).

Over 1 to 7 the chain is Extracellular; it reads MATELDK. Residues 8-28 form a helical membrane-spanning segment; the sequence is IFLILAIAEFIISMLGNVFIG. Topologically, residues 29-50 are cytoplasmic; the sequence is LVNCSEGIKNQKVFSADFILTC. A helical membrane pass occupies residues 51–71; sequence LAISTIGQLLVILFDSFLVGL. Residues 72–101 lie on the Extracellular side of the membrane; it reads ASHLYTTYRLGKTVIMLWHMTNHLTTWLAT. The helical transmembrane segment at 102-122 threads the bilayer; the sequence is CLSIFYFFKIAHFPHSLFLWL. Over 123–127 the chain is Cytoplasmic; that stretch reads RWRMN. The helical transmembrane segment at 128-148 threads the bilayer; it reads GMIVMLLILSLFLLIFDSLVL. Residues 149 to 187 lie on the Extracellular side of the membrane; it reads EIFIDISLNIIDKSNLTLYLDESKTLYDKLSILKTLLSL. An N-linked (GlcNAc...) asparagine glycan is attached at Asn163. A helical transmembrane segment spans residues 188–208; the sequence is TSFIPFSLFLTSLLFLFLSLV. At 209 to 238 the chain is on the cytoplasmic side; that stretch reads RHTRNLKLSSLGSRDSSTEAHRRAMKMVMS. A helical transmembrane segment spans residues 239–259; it reads FLFLFIVHFFSLQVANWIFFM. The Extracellular segment spans residues 260 to 265; sequence LWNNKC. The helical transmembrane segment at 266–286 threads the bilayer; it reads IKFVMLALNAFPSCHSFILIL. Residues 287-314 are Cytoplasmic-facing; the sequence is GNSKLQQTAVRLLWHLRNYTKTPNPLPL.

Belongs to the G-protein coupled receptor T2R family.

The protein resides in the membrane. Receptor that may play a role in the perception of bitterness and is gustducin-linked. May play a role in sensing the chemical composition of the gastrointestinal content. The activity of this receptor may stimulate alpha gustducin, mediate PLC-beta-2 activation and lead to the gating of TRPM5. The polypeptide is Taste receptor type 2 member 42 (TAS2R42) (Homo sapiens (Human)).